The sequence spans 264 residues: SPRY domain-containing SOCS box protein 2 (264 aa).

The span at 1–19 (MGQTALARGSSSTPTSQAL) shows a compositional bias: polar residues. The interval 1 to 34 (MGQTALARGSSSTPTSQALYSDFSPPEGLEELLS) is disordered. Residues 26–221 (PEGLEELLSA…VRIRYMGERR (196 aa)) enclose the B30.2/SPRY domain. The SOCS box domain maps to 222-264 (VEEPQSLLHLSRLCVRHALGDTRLGQISTLPLPPAMKRYLLYK).

Belongs to the SPSB family. As to quaternary structure, component of the probable ECS(SPSB2) E3 ubiquitin-protein ligase complex which contains CUL5, RNF7/RBX2, Elongin BC complex and SPSB2. Interacts with CUL5, RNF7, ELOB and ELOC. Interacts with MET. Interacts (via B30.2/SPRY domain) with PAWR; this interaction occurs in association with the Elongin BC complex. Interacts with NOS2.

The protein resides in the cytoplasm. It localises to the cytosol. The protein operates within protein modification; protein ubiquitination. Its function is as follows. Substrate recognition component of a SCF-like ECS (Elongin BC-CUL2/5-SOCS-box protein) E3 ubiquitin-protein ligase complex which mediates the ubiquitination and subsequent proteasomal degradation of target proteins. Negatively regulates nitric oxide (NO) production and limits cellular toxicity in activated macrophages by mediating the ubiquitination and proteasomal degradation of NOS2. Acts as a bridge which links NOS2 with the ECS E3 ubiquitin ligase complex components ELOC and CUL5. This is SPRY domain-containing SOCS box protein 2 (Spsb2) from Mus musculus (Mouse).